The following is a 141-amino-acid chain: Cholinesterase (141 aa).

N-linked (GlcNAc...) asparagine glycosylation occurs at N39. A substrate-binding site is contributed by 49-50 (GG). The Acyl-ester intermediate role is filled by S131. S131 is modified (phosphoserine).

Belongs to the type-B carboxylesterase/lipase family. In terms of assembly, homotetramer; disulfide-linked. Dimer of dimers. Present in most cells except erythrocytes.

It localises to the secreted. The catalysed reaction is an acylcholine + H2O = a carboxylate + choline + H(+). In terms of biological role, esterase with broad substrate specificity. Contributes to the inactivation of the neurotransmitter acetylcholine. Can degrade neurotoxic organophosphate esters. The protein is Cholinesterase (BCHE) of Canis lupus familiaris (Dog).